The following is a 997-amino-acid chain: Protein translocase subunit SecA (997 aa).

Residues glutamine 84, 102 to 106 (GEGKT), and aspartate 582 each bind ATP. Residues 950-997 (PYVPVPEAKPEPSEVFGVERKRATPPPQPGLSRAERRRLMRQEKKRKK) form a disordered region. Over residues 957–971 (AKPEPSEVFGVERKR) the composition is skewed to basic and acidic residues. A compositionally biased stretch (basic residues) spans 984 to 997 (ERRRLMRQEKKRKK).

It belongs to the SecA family. In terms of assembly, part of the essential Sec protein translocation apparatus which comprises SecA, SecYEG and auxiliary proteins SecDF. Other proteins may also be involved. Monomer and homodimer.

The protein localises to the cell inner membrane. It localises to the cytoplasm. The catalysed reaction is ATP + H2O + cellular proteinSide 1 = ADP + phosphate + cellular proteinSide 2.. In terms of biological role, part of the Sec protein translocase complex. Interacts with the SecYEG preprotein conducting channel. Has a central role in coupling the hydrolysis of ATP to the transfer of proteins into and across the cell membrane, serving as an ATP-driven molecular motor driving the stepwise translocation of polypeptide chains across the membrane. The sequence is that of Protein translocase subunit SecA from Thermus thermophilus (strain ATCC 27634 / DSM 579 / HB8).